The sequence spans 213 residues: Phosphate-specific transport system accessory protein PhoU homolog 2 (213 aa).

This sequence belongs to the PhoU family. In terms of assembly, homodimer.

It is found in the cytoplasm. Plays a role in the regulation of phosphate uptake. In this role, it may bind, possibly as a chaperone, to PhoR, PhoP or a PhoR-PhoP complex to promote dephosphorylation of phospho-PhoP, or inhibit formation of the PhoR-PhoP transitory complex. The sequence is that of Phosphate-specific transport system accessory protein PhoU homolog 2 (phoU2) from Mycobacterium bovis (strain ATCC BAA-935 / AF2122/97).